The following is a 187-amino-acid chain: Large ribosomal subunit protein uL18 (187 aa).

The protein belongs to the universal ribosomal protein uL18 family. As to quaternary structure, part of the 50S ribosomal subunit. Interacts with proteins L5 and L21e, and attaches the 5S rRNA to the 23S rRNA. Has been cross-linked to L21e.

In terms of biological role, this is one of 5 proteins that mediate the attachment of the 5S rRNA onto the large ribosomal subunit, where it forms part of the central protuberance and stabilizes the orientation of adjacent RNA domains. This chain is Large ribosomal subunit protein uL18 (rpl18), found in Haloarcula marismortui (strain ATCC 43049 / DSM 3752 / JCM 8966 / VKM B-1809) (Halobacterium marismortui).